The primary structure comprises 167 residues: Insertion element IS1 1 protein InsB (167 aa).

It belongs to the transposase 27 family.

Its function is as follows. Absolutely required for transposition of IS1. This chain is Insertion element IS1 1 protein InsB (insB1), found in Escherichia coli (strain K12).